Here is a 1213-residue protein sequence, read N- to C-terminus: Protein jagged-1b (1213 aa).

The first 26 residues, 1-26 (MILRRSSVFSAFYLHAFLLCLRTTVS), serve as a signal peptide directing secretion. Residues 27–1064 (DASGHFELEI…HQIPSPKTDY (1038 aa)) are Extracellular-facing. Residue asparagine 139 is glycosylated (N-linked (GlcNAc...) asparagine). Residues 182–226 (VTCLEHYYGFGCNKFCRPRDEFFGHYTCDQNGNKTCLEGWTGPDC) enclose the DSL domain. 2 disulfides stabilise this stretch: cysteine 184-cysteine 193 and cysteine 197-cysteine 209. Residue asparagine 214 is glycosylated (N-linked (GlcNAc...) asparagine). 39 disulfides stabilise this stretch: cysteine 217/cysteine 226, cysteine 231/cysteine 242, cysteine 235/cysteine 248, cysteine 250/cysteine 259, cysteine 262/cysteine 273, cysteine 268/cysteine 279, cysteine 281/cysteine 290, cysteine 297/cysteine 309, cysteine 303/cysteine 319, cysteine 321/cysteine 330, cysteine 337/cysteine 348, cysteine 342/cysteine 357, cysteine 359/cysteine 368, cysteine 375/cysteine 386, cysteine 380/cysteine 395, cysteine 397/cysteine 406, cysteine 413/cysteine 424, cysteine 418/cysteine 433, cysteine 435/cysteine 444, cysteine 451/cysteine 461, cysteine 455/cysteine 470, cysteine 472/cysteine 481, cysteine 488/cysteine 499, cysteine 493/cysteine 508, cysteine 510/cysteine 519, cysteine 526/cysteine 537, cysteine 531/cysteine 546, cysteine 548/cysteine 557, cysteine 596/cysteine 612, cysteine 614/cysteine 623, cysteine 630/cysteine 641, cysteine 635/cysteine 650, cysteine 652/cysteine 661, cysteine 668/cysteine 679, cysteine 673/cysteine 688, cysteine 690/cysteine 699, cysteine 706/cysteine 717, cysteine 711/cysteine 726, and cysteine 728/cysteine 737. The EGF-like 1 domain occupies 227 to 260 (NTAICRQGCSTEHGSCKQPGGCKCLYGWQGPYCD). An EGF-like 2; atypical domain is found at 261-291 (KCIPHPGCVHGTCVEPWQCLCDTNWGGQLCD). 2 EGF-like domains span residues 293–331 (DLNY…VNCE) and 333–369 (AEHA…TSCE). One can recognise an EGF-like 5; calcium-binding domain in the interval 371–407 (NVDDCTPNQCKHGGTCQDLVNGFKCACPPHWTGKTCQ). Positions 409 to 445 (DANECEDKPCVNAKSCHNLIGAYFCECLPGWSGQNCD) constitute an EGF-like 6; calcium-binding domain. The EGF-like 7; calcium-binding domain occupies 447–482 (NINDCKGQCLNGGTCKDLVNGYRCLCPPGYTGEQCE). The 37-residue stretch at 484–520 (DVDECASSPCLNGGRCQDEVNGFQCLCPAGFSGQLCQ) folds into the EGF-like 8; calcium-binding domain. EGF-like domains follow at residues 522–558 (DIDY…KNCS) and 592–624 (SSNV…TYCH). Asparagine 556 carries N-linked (GlcNAc...) asparagine glycosylation. Residues 626–662 (NINDCESNPCRNGGTCIDKVNVYQCICADGWEGVHCE) enclose the EGF-like 11; calcium-binding domain. The EGF-like 12; calcium-binding domain maps to 664–700 (NIDDCSLNPCLNKGACQDLVNDFYCECRNGWKGKTCH). Residues 702–738 (RDSQCDEATCNNGGTCHDEGDTFKCRCSPGWEGATCN) form the EGF-like 13 domain. A glycan (N-linked (GlcNAc...) asparagine) is linked at asparagine 742. 9 disulfide bridges follow: cysteine 745-cysteine 756, cysteine 750-cysteine 765, cysteine 767-cysteine 776, cysteine 783-cysteine 794, cysteine 788-cysteine 803, cysteine 805-cysteine 814, cysteine 821-cysteine 832, cysteine 826-cysteine 841, and cysteine 843-cysteine 852. The EGF-like 14 domain occupies 746–777 (LPNPCENGGTCVVNGDSFNCVCKEGWEGSTCT). The region spanning 779 to 815 (NTNDCNPHPCYNSGTCVDGENWYRCECAPGFAGPDCR) is the EGF-like 15; calcium-binding domain. The EGF-like 16; calcium-binding domain occupies 817-853 (NINECQSSPCAFGSTCVDEINGYRCLCPPGRIGPDCQ). The VWFC domain maps to 860-914 (CIANGQVTADGAKWEEDCNICQCQNGRIHCTMMWCGPKSCRIGKARGGCPASQSC). The 39-residue stretch at 918 to 956 (KEEQCFVKPCPSLGECWPSAPPPPSKCHASFSYQDDSCA) folds into the EGF-like 17 domain. N-linked (GlcNAc...) asparagine glycans are attached at residues asparagine 957, asparagine 988, and asparagine 1042. Residues 1065-1087 (LVPLLSSIFIVLWIFALASAFLW) form a helical membrane-spanning segment. At 1088–1213 (CIHRRRKQNT…QSLNRMEYIV (126 aa)) the chain is on the cytoplasmic side. The disordered stretch occupies residues 1181–1202 (EERAPNKNPNWTNKQDNRDLET).

The protein localises to the membrane. It is found in the cell membrane. Ligand for Notch receptors and involved in the mediation of Notch signaling. Seems to be involved in cell-fate decisions. In Danio rerio (Zebrafish), this protein is Protein jagged-1b (jag1b).